The following is a 110-amino-acid chain: METIAKHRYARTSVQKARLVADLVRGKKVAQALEILTFTNKKAAALVKKVLESAIANAEHNDGADIDDLKVAKIFVDEGPSMKRVMPRAKGRADRILKRTSHITVVVSDR.

It belongs to the universal ribosomal protein uL22 family. Part of the 50S ribosomal subunit.

In terms of biological role, this protein binds specifically to 23S rRNA; its binding is stimulated by other ribosomal proteins, e.g. L4, L17, and L20. It is important during the early stages of 50S assembly. It makes multiple contacts with different domains of the 23S rRNA in the assembled 50S subunit and ribosome. Functionally, the globular domain of the protein is located near the polypeptide exit tunnel on the outside of the subunit, while an extended beta-hairpin is found that lines the wall of the exit tunnel in the center of the 70S ribosome. The protein is Large ribosomal subunit protein uL22 of Histophilus somni (strain 2336) (Haemophilus somnus).